A 427-amino-acid polypeptide reads, in one-letter code: Peptidase B (427 aa).

2 residues coordinate Mn(2+): lysine 195 and aspartate 200. Residue lysine 207 is part of the active site. The Mn(2+) site is built by aspartate 218, aspartate 277, and glutamate 279. Arginine 281 is a catalytic residue.

Belongs to the peptidase M17 family. In terms of assembly, homohexamer. Mn(2+) is required as a cofactor.

It localises to the cytoplasm. It catalyses the reaction Release of an N-terminal amino acid, Xaa, from a peptide or arylamide. Xaa is preferably Glu or Asp but may be other amino acids, including Leu, Met, His, Cys and Gln.. Probably plays an important role in intracellular peptide degradation. This chain is Peptidase B, found in Shigella flexneri serotype 5b (strain 8401).